The sequence spans 877 residues: SRP-independent targeting protein 1 (877 aa).

S309, S310, S311, S332, and S334 each carry phosphoserine. Disordered regions lie at residues 369–414, 446–521, and 550–579; these read LRKQ…PSND, DDYT…DVLS, and KPFN…SNHF. The segment covering 389 to 402 has biased composition (low complexity); sequence RSQSYSSSNMSRSP. The stretch at 412 to 441 forms a coiled coil; it reads SNDELVYDELNNQINEVQDRAKNEEIVLYN. The segment covering 447-462 has biased composition (basic and acidic residues); that stretch reads DYTKERGEQEQDRTSY. A compositionally biased stretch (acidic residues) spans 470 to 501; the sequence is YDDEEGGNEDNYDDDEDDDDDDDDDDESDDEG. 2 stretches are compositionally biased toward polar residues: residues 510-521 and 551-579; these read LSRSGSSTDVLS and PFNQ…SNHF. Glycyl lysine isopeptide (Lys-Gly) (interchain with G-Cter in ubiquitin) cross-links involve residues K668 and K670. S692, S694, and S706 each carry phosphoserine. The disordered stretch occupies residues 773–815; sequence SLPKEREDDNDSTNSTIVPNHPDNDNYNDNDNDNNTGINSNNF. The span at 805 to 815 shows a compositional bias: low complexity; the sequence is DNNTGINSNNF. S841 is subject to Phosphoserine.

As to quaternary structure, interacts with ENV10/SND2.

The protein resides in the cytoplasm. Its function is as follows. Functions in the SND pathway, a SRP (signal recognition particle) and GET (guided entry of tail-anchored proteins) independent pathway for targeting a broad range of substrate proteins to the endoplasmic reticulum. SND functions in parallel to GET in targeting proteins with downstream hydrophobic motifs. The chain is SRP-independent targeting protein 1 from Saccharomyces cerevisiae (strain ATCC 204508 / S288c) (Baker's yeast).